The sequence spans 318 residues: Glutathione synthetase (318 aa).

The region spanning 128 to 313 (KLAILNFSRF…VAAMFADAVA (186 aa)) is the ATP-grasp domain. 154–210 (LKEHGDIIIKPLDGMGGMGIFRLTEKDPNIGSILETLMQLDSRTIMAQRYIPEIVHG) contributes to the ATP binding site. Mg(2+)-binding residues include glutamate 284 and asparagine 286.

It belongs to the prokaryotic GSH synthase family. Mg(2+) serves as cofactor. The cofactor is Mn(2+).

The enzyme catalyses gamma-L-glutamyl-L-cysteine + glycine + ATP = glutathione + ADP + phosphate + H(+). It participates in sulfur metabolism; glutathione biosynthesis; glutathione from L-cysteine and L-glutamate: step 2/2. In Neisseria meningitidis serogroup A / serotype 4A (strain DSM 15465 / Z2491), this protein is Glutathione synthetase.